The following is a 444-amino-acid chain: Spermidine/putrescine import ATP-binding protein PotA (444 aa).

Residues 11–332 form the ABC transporter domain; that stretch reads ISLVDVDKEF…PVNKWVANFI (322 aa). An ATP-binding site is contributed by 43-50; the sequence is GPSGSGKT. Residues 111 to 201 form an insert region; the sequence is RIKKKAEEIP…ESFKKKYLTR (91 aa).

Belongs to the ABC transporter superfamily. Spermidine/putrescine importer (TC 3.A.1.11.1) family. In terms of assembly, the complex is composed of two ATP-binding proteins (PotA), two transmembrane proteins (PotB and PotC) and a solute-binding protein (PotD).

It is found in the cell membrane. It catalyses the reaction ATP + H2O + polyamine-[polyamine-binding protein]Side 1 = ADP + phosphate + polyamineSide 2 + [polyamine-binding protein]Side 1.. Its function is as follows. Part of the ABC transporter complex PotABCD involved in spermidine/putrescine import. Responsible for energy coupling to the transport system. The sequence is that of Spermidine/putrescine import ATP-binding protein PotA from Mesomycoplasma hyopneumoniae (strain J / ATCC 25934 / NCTC 10110) (Mycoplasma hyopneumoniae).